The sequence spans 97 residues: Probable lipopolysaccharide assembly protein A (97 aa).

Transmembrane regions (helical) follow at residues 1-21 (MIKY…AITI) and 46-66 (VAIL…FFYI). A coiled-coil region spans residues 67 to 95 (KLKLKNMALARQVKRQTLQINELTTTRDK).

This sequence belongs to the LapA family.

It is found in the cell inner membrane. In terms of biological role, involved in the assembly of lipopolysaccharide (LPS). This chain is Probable lipopolysaccharide assembly protein A, found in Haemophilus influenzae (strain ATCC 51907 / DSM 11121 / KW20 / Rd).